The primary structure comprises 2839 residues: Bifunctional DNA-directed RNA polymerase subunit beta-beta' (2839 aa).

Residues 1-1433 (MVDSSYMCAS…CLNVALKQNN (1433 aa)) form a DNA-directed RNA polymerase subunit beta region. The tract at residues 1436-2839 (IEDISHTNIA…KESVAESRYN (1404 aa)) is DNA-directed RNA polymerase subunit beta'. Cysteine 1501, cysteine 1503, cysteine 1516, and cysteine 1519 together coordinate Zn(2+). Residues aspartate 1893, aspartate 1895, and aspartate 1897 each coordinate Mg(2+). Residues cysteine 2238, cysteine 2312, cysteine 2319, and cysteine 2322 each coordinate Zn(2+).

It in the N-terminal section; belongs to the RNA polymerase beta chain family. In the C-terminal section; belongs to the RNA polymerase beta' chain family. As to quaternary structure, the RNAP catalytic core consists of 2 alpha, 1 beta/beta' and 1 omega subunit. When a sigma factor is associated with the core the holoenzyme is formed, which can initiate transcription. The cofactor is Mg(2+). Zn(2+) is required as a cofactor.

The catalysed reaction is RNA(n) + a ribonucleoside 5'-triphosphate = RNA(n+1) + diphosphate. DNA-dependent RNA polymerase catalyzes the transcription of DNA into RNA using the four ribonucleoside triphosphates as substrates. The polypeptide is Bifunctional DNA-directed RNA polymerase subunit beta-beta' (rpoBC) (Wolbachia sp. subsp. Brugia malayi (strain TRS)).